A 120-amino-acid chain; its full sequence is Large ribosomal subunit protein bL12 (120 aa).

The protein belongs to the bacterial ribosomal protein bL12 family. As to quaternary structure, homodimer. Part of the ribosomal stalk of the 50S ribosomal subunit. Forms a multimeric L10(L12)X complex, where L10 forms an elongated spine to which 2 to 4 L12 dimers bind in a sequential fashion. Binds GTP-bound translation factors.

Functionally, forms part of the ribosomal stalk which helps the ribosome interact with GTP-bound translation factors. Is thus essential for accurate translation. This is Large ribosomal subunit protein bL12 from Pseudoalteromonas translucida (strain TAC 125).